A 903-amino-acid polypeptide reads, in one-letter code: DNA transposase THAP9 (903 aa).

The THAP-type zinc finger occupies 1-89 (MTRSCSAVGC…LKKGAVPSVS (89 aa)). An HCFC1-binding motif (HBM) motif is present at residues 123–126 (DHNY).

Active transposase that specifically recognizes the bipartite 5'-TXXGGGX(A/T)-3' consensus motif and mediates transposition. This Homo sapiens (Human) protein is DNA transposase THAP9 (THAP9).